The chain runs to 435 residues: Amidase 1 (435 aa).

Catalysis depends on charge relay system residues K38 and S115. The Acyl-ester intermediate role is filled by S139.

This sequence belongs to the amidase family.

It is found in the cytoplasm. The protein localises to the nucleus. The protein resides in the nucleoplasm. The catalysed reaction is a monocarboxylic acid amide + H2O = a monocarboxylate + NH4(+). In terms of biological role, amidase involved in auxin biosynthesis. Converts indole-3-acetamide (IAM) to indole-3-acetate, and phenyl-2-acetamide (PAM) to phenyl-2-acetate. Substrate preference is PAM &gt; IAM. The polypeptide is Amidase 1 (Oryza sativa subsp. japonica (Rice)).